The sequence spans 305 residues: tRNA uridine(34) hydroxylase (305 aa).

Residues 130–228 (DDPDTLVIDT…YLGEIPEQES (99 aa)) form the Rhodanese domain. Cys188 functions as the Cysteine persulfide intermediate in the catalytic mechanism.

The protein belongs to the TrhO family.

It carries out the reaction uridine(34) in tRNA + AH2 + O2 = 5-hydroxyuridine(34) in tRNA + A + H2O. In terms of biological role, catalyzes oxygen-dependent 5-hydroxyuridine (ho5U) modification at position 34 in tRNAs. This is tRNA uridine(34) hydroxylase from Synechococcus sp. (strain CC9902).